Here is a 147-residue protein sequence, read N- to C-terminus: UPF0178 protein Nther_1836 (147 aa).

It belongs to the UPF0178 family.

The protein is UPF0178 protein Nther_1836 of Natranaerobius thermophilus (strain ATCC BAA-1301 / DSM 18059 / JW/NM-WN-LF).